The chain runs to 308 residues: uncharacterized protein (308 aa).

10 helical membrane passes run 45-65 (LGLA…KIAL), 69-89 (SPFA…LPFL), 100-120 (IGIA…YTTA), 122-142 (NAGF…WLVY), 151-171 (VSGV…SGFN), 172-192 (IGDI…AMIS), 201-221 (TMLA…FAVF), 226-246 (FEIN…ATFV), 263-283 (AAVI…AVLA), and 285-305 (ILTP…IIVS). 2 consecutive EamA domains span residues 52–166 (LIWG…FLSG) and 178–306 (LFCA…IVSL).

It belongs to the EamA transporter family.

The protein localises to the cell membrane. This is an uncharacterized protein from Archaeoglobus fulgidus (strain ATCC 49558 / DSM 4304 / JCM 9628 / NBRC 100126 / VC-16).